A 516-amino-acid polypeptide reads, in one-letter code: Maturase K (516 aa).

The protein belongs to the intron maturase 2 family. MatK subfamily.

The protein resides in the plastid. It is found in the chloroplast. Usually encoded in the trnK tRNA gene intron. Probably assists in splicing its own and other chloroplast group II introns. This is Maturase K from Cypripedium calceolus (Yellow lady's slipper).